We begin with the raw amino-acid sequence, 405 residues long: Tryptophan synthase beta chain (405 aa).

An N6-(pyridoxal phosphate)lysine modification is found at lysine 98.

Belongs to the TrpB family. Tetramer of two alpha and two beta chains. The cofactor is pyridoxal 5'-phosphate.

It catalyses the reaction (1S,2R)-1-C-(indol-3-yl)glycerol 3-phosphate + L-serine = D-glyceraldehyde 3-phosphate + L-tryptophan + H2O. The protein operates within amino-acid biosynthesis; L-tryptophan biosynthesis; L-tryptophan from chorismate: step 5/5. Functionally, the beta subunit is responsible for the synthesis of L-tryptophan from indole and L-serine. This chain is Tryptophan synthase beta chain, found in Xanthomonas axonopodis pv. citri (strain 306).